The following is a 447-amino-acid chain: Tubulin beta chain (447 aa).

Positions 11, 69, 138, 142, 143, 144, 204, and 226 each coordinate GTP. Glu69 is a binding site for Mg(2+). The disordered stretch occupies residues 427–447 (DAGIDEEEEEYEEELPLEGEE). A compositionally biased stretch (acidic residues) spans 429-447 (GIDEEEEEYEEELPLEGEE).

Belongs to the tubulin family. In terms of assembly, dimer of alpha and beta chains. A typical microtubule is a hollow water-filled tube with an outer diameter of 25 nm and an inner diameter of 15 nM. Alpha-beta heterodimers associate head-to-tail to form protofilaments running lengthwise along the microtubule wall with the beta-tubulin subunit facing the microtubule plus end conferring a structural polarity. Microtubules usually have 13 protofilaments but different protofilament numbers can be found in some organisms and specialized cells. Mg(2+) serves as cofactor.

The protein localises to the cytoplasm. It localises to the cytoskeleton. Tubulin is the major constituent of microtubules, a cylinder consisting of laterally associated linear protofilaments composed of alpha- and beta-tubulin heterodimers. Microtubules grow by the addition of GTP-tubulin dimers to the microtubule end, where a stabilizing cap forms. Below the cap, tubulin dimers are in GDP-bound state, owing to GTPase activity of alpha-tubulin. This is Tubulin beta chain (TUB2) from Hapsidospora chrysogena (Acremonium chrysogenum).